Here is a 66-residue protein sequence, read N- to C-terminus: Type 3 secretion system chaperone YscE (66 aa).

It belongs to the YscE family. Component of the heterodimeric YscE-YscG chaperone. The YscE-YscG chaperone forms a stable ternary complex with YscF/SctF. YscE interacts with YscG, but makes very little direct contact with YscF. Homodimer in solution.

It localises to the cytoplasm. Functionally, chaperone of the type III secretion system (T3SS), also called injectisome, which is used to inject bacterial effector proteins into eukaryotic host cells. Along with YscG, prevents premature polymerization of the YscF/SctF needle protein within the cytoplasm. Is also required for stable expression of cytosolic YscF and for YscF secretion. Likely plays a role in targeting YscF present in the cytosolic YscEFG complex to the T3SS apparatus. Required for Yop secretion. The chain is Type 3 secretion system chaperone YscE from Yersinia pestis.